The following is a 176-amino-acid chain: MKQFECMYTLINIHEAETFKCMYTLMHPLIDIGVVWGDDGVTAIILLEGVKKYSNDSSPPMAIKKLLDSIRMFLDGCEVDFDLSVLDFGGCTEYQRRVLDVVSSIPRGSTLTYSEVAARAGGSPRSAAGALSRNPFPLVIPCHRVIRSDGNAGGYQGGVKLKKRLLEMEGVSLEGQ.

C142 (nucleophile; methyl group acceptor) is an active-site residue.

The protein belongs to the MGMT family.

The protein localises to the cytoplasm. The enzyme catalyses a 6-O-methyl-2'-deoxyguanosine in DNA + L-cysteinyl-[protein] = S-methyl-L-cysteinyl-[protein] + a 2'-deoxyguanosine in DNA. It carries out the reaction a 4-O-methyl-thymidine in DNA + L-cysteinyl-[protein] = a thymidine in DNA + S-methyl-L-cysteinyl-[protein]. In terms of biological role, involved in the cellular defense against the biological effects of O6-methylguanine (O6-MeG) and O4-methylthymine (O4-MeT) in DNA. Repairs the methylated nucleobase in DNA by stoichiometrically transferring the methyl group to a cysteine residue in the enzyme. This is a suicide reaction: the enzyme is irreversibly inactivated. The polypeptide is Methylated-DNA--protein-cysteine methyltransferase (Methanothermobacter thermautotrophicus (strain ATCC 29096 / DSM 1053 / JCM 10044 / NBRC 100330 / Delta H) (Methanobacterium thermoautotrophicum)).